We begin with the raw amino-acid sequence, 204 residues long: Refilin-A (204 aa).

A disordered region spans residues 1–52 (MVGHLHLQAMGDTREQSRDGLLDSPDSGLPPSPSPSPPFYALSPGTLDTRTT). Residues 12–21 (DTREQSRDGL) show a composition bias toward basic and acidic residues. Positions 28–38 (GLPPSPSPSPP) are enriched in pro residues. Arg-151 is subject to Asymmetric dimethylarginine.

The protein belongs to the Refilin family. In terms of assembly, interacts with FLNA and FLNB. Detected in various tissues, with highest expression in lung, followed by spleen.

It is found in the cytoplasm. The protein localises to the cytoskeleton. In terms of biological role, involved in the regulation of the perinuclear actin network and nuclear shape through interaction with filamins. Plays an essential role in the formation of cartilaginous skeletal elements. The sequence is that of Refilin-A (Rflna) from Mus musculus (Mouse).